The sequence spans 324 residues: Glutaminase 2 (324 aa).

7 residues coordinate substrate: serine 75, asparagine 127, glutamate 171, asparagine 178, tyrosine 202, tyrosine 254, and valine 272.

Belongs to the glutaminase family. As to quaternary structure, homotetramer.

It carries out the reaction L-glutamine + H2O = L-glutamate + NH4(+). In Halalkalibacterium halodurans (strain ATCC BAA-125 / DSM 18197 / FERM 7344 / JCM 9153 / C-125) (Bacillus halodurans), this protein is Glutaminase 2.